We begin with the raw amino-acid sequence, 435 residues long: Cysteine--tRNA ligase (435 aa).

C24 lines the Zn(2+) pocket. A 'HIGH' region motif is present at residues 26-36 (PTVYDHIHIGN). Positions 202, 228, and 232 each coordinate Zn(2+). The short motif at 260-264 (KMSKS) is the 'KMSKS' region element. K263 is a binding site for ATP.

Belongs to the class-I aminoacyl-tRNA synthetase family. Monomer. Requires Zn(2+) as cofactor.

Its subcellular location is the cytoplasm. The enzyme catalyses tRNA(Cys) + L-cysteine + ATP = L-cysteinyl-tRNA(Cys) + AMP + diphosphate. The sequence is that of Cysteine--tRNA ligase from Mycoplasmoides gallisepticum (strain R(low / passage 15 / clone 2)) (Mycoplasma gallisepticum).